A 404-amino-acid chain; its full sequence is Propionate kinase (404 aa).

It belongs to the acetokinase family. PduW subfamily.

The protein localises to the cytoplasm. The catalysed reaction is propanoate + ATP = propanoyl phosphate + ADP. Its pathway is polyol metabolism; 1,2-propanediol degradation. In terms of biological role, works with phosphate acetyltransferase (pta) to capture exogenous propionate and regenerate propionyl-CoA during degradation of 1,2-propanediol (1,2-PD). This chain is Propionate kinase, found in Klebsiella pneumoniae (strain 342).